The primary structure comprises 448 residues: Probable glycine dehydrogenase (decarboxylating) subunit 1 (448 aa).

This sequence belongs to the GcvP family. N-terminal subunit subfamily. As to quaternary structure, the glycine cleavage system is composed of four proteins: P, T, L and H. In this organism, the P 'protein' is a heterodimer of two subunits.

The catalysed reaction is N(6)-[(R)-lipoyl]-L-lysyl-[glycine-cleavage complex H protein] + glycine + H(+) = N(6)-[(R)-S(8)-aminomethyldihydrolipoyl]-L-lysyl-[glycine-cleavage complex H protein] + CO2. The glycine cleavage system catalyzes the degradation of glycine. The P protein binds the alpha-amino group of glycine through its pyridoxal phosphate cofactor; CO(2) is released and the remaining methylamine moiety is then transferred to the lipoamide cofactor of the H protein. This Exiguobacterium sibiricum (strain DSM 17290 / CCUG 55495 / CIP 109462 / JCM 13490 / 255-15) protein is Probable glycine dehydrogenase (decarboxylating) subunit 1.